A 346-amino-acid polypeptide reads, in one-letter code: Annexin A1 (346 aa).

Alanine 2 bears the N-acetylalanine mark. Serine 5 is subject to Phosphoserine; by TRPM7. Glutamine 19 participates in a covalent cross-link: Isoglutamyl lysine isopeptide (Gln-Lys) (interchain with K-?). Tyrosine 21 bears the Phosphotyrosine; by EGFR mark. At serine 27 the chain carries Phosphoserine; by PKC. Phosphoserine is present on residues serine 34 and serine 37. Threonine 41 is modified (phosphothreonine). 4 Annexin repeats span residues 42 to 113 (FNPS…ALLK), 114 to 185 (TPAQ…SLAK), 197 to 269 (DLAD…AIVK), and 273 to 344 (SKPA…ALCG). At lysine 58 the chain carries N6-acetyllysine. Positions 59, 60, 62, 97, 100, 105, 127, 129, 131, 132, and 134 each coordinate Ca(2+). At threonine 136 the chain carries Phosphothreonine. Ca(2+) is bound by residues aspartate 171, glycine 210, and arginine 213. A Glycyl lysine isopeptide (Lys-Gly) (interchain with G-Cter in SUMO1); alternate cross-link involves residue lysine 214. Lysine 214 is covalently cross-linked (Glycyl lysine isopeptide (Lys-Gly) (interchain with G-Cter in SUMO2); alternate). Ca(2+) is bound at residue glycine 215. Lysine 239 bears the N6-acetyllysine mark. Aspartate 253, glutamate 255, and leucine 256 together coordinate Ca(2+). Residue lysine 257 forms a Glycyl lysine isopeptide (Lys-Gly) (interchain with G-Cter in SUMO1) linkage. Ca(2+) is bound by residues glutamate 261, methionine 286, glycine 288, and glycine 290. At lysine 312 the chain carries N6-acetyllysine. The cysteines at positions 324 and 343 are disulfide-linked. Residues leucine 328, glutamate 330, and threonine 331 each contribute to the Ca(2+) site. Lysine 332 participates in a covalent cross-link: Glycyl lysine isopeptide (Lys-Gly) (interchain with G-Cter in SUMO1). Glutamate 336 serves as a coordination point for Ca(2+).

This sequence belongs to the annexin family. In terms of assembly, homodimer; non-covalently linked. Homodimer; linked by transglutamylation. Homodimers linked by transglutamylation are observed in placenta, but not in other tissues. Interacts with S100A11. Heterotetramer, formed by two molecules each of S100A11 and ANXA1. Interacts with DYSF. Interacts with EGFR. Post-translationally, phosphorylated by protein kinase C, EGFR and TRPM7. Phosphorylated in response to EGF treatment. In terms of processing, sumoylated. Proteolytically cleaved by cathepsin CTSG to release the active N-terminal peptide Ac2-26. Detected in resting neutrophils. Detected in peripheral blood T-cells. Detected in extracellular vesicles in blood serum from patients with inflammatory bowel disease, but not in serum from healthy donors. Detected in placenta (at protein level). Detected in liver.

Its subcellular location is the nucleus. The protein resides in the cytoplasm. It localises to the cell projection. It is found in the cilium. The protein localises to the cell membrane. Its subcellular location is the membrane. The protein resides in the endosome membrane. It localises to the basolateral cell membrane. It is found in the apical cell membrane. The protein localises to the lateral cell membrane. Its subcellular location is the secreted. The protein resides in the extracellular space. It localises to the extracellular exosome. It is found in the cytoplasmic vesicle. The protein localises to the secretory vesicle lumen. Its subcellular location is the phagocytic cup. The protein resides in the early endosome. It localises to the cytoplasmic vesicle membrane. In terms of biological role, plays important roles in the innate immune response as effector of glucocorticoid-mediated responses and regulator of the inflammatory process. Has anti-inflammatory activity. Plays a role in glucocorticoid-mediated down-regulation of the early phase of the inflammatory response. Contributes to the adaptive immune response by enhancing signaling cascades that are triggered by T-cell activation, regulates differentiation and proliferation of activated T-cells. Promotes the differentiation of T-cells into Th1 cells and negatively regulates differentiation into Th2 cells. Has no effect on unstimulated T cells. Negatively regulates hormone exocytosis via activation of the formyl peptide receptors and reorganization of the actin cytoskeleton. Has high affinity for Ca(2+) and can bind up to eight Ca(2+) ions. Displays Ca(2+)-dependent binding to phospholipid membranes. Plays a role in the formation of phagocytic cups and phagosomes. Plays a role in phagocytosis by mediating the Ca(2+)-dependent interaction between phagosomes and the actin cytoskeleton. Functionally, functions at least in part by activating the formyl peptide receptors and downstream signaling cascades. Promotes chemotaxis of granulocytes and monocytes via activation of the formyl peptide receptors. Promotes rearrangement of the actin cytoskeleton, cell polarization and cell migration. Promotes resolution of inflammation and wound healing. Acts via neutrophil N-formyl peptide receptors to enhance the release of CXCL2. This Homo sapiens (Human) protein is Annexin A1 (ANXA1).